Reading from the N-terminus, the 86-residue chain is Colicin-E9 immunity protein (86 aa).

It belongs to the colicins ColE2/ColE8/ColE9 and pyocins S1/S2 family.

Functionally, this protein is able to protect a cell, which harbors the plasmid ColE9 encoding colicin E9, against colicin E9, it binds specifically to the DNase-type colicin and inhibits its bactericidal activity. This is Colicin-E9 immunity protein (imm) from Escherichia coli.